The following is a 307-amino-acid chain: UDP-3-O-acyl-N-acetylglucosamine deacetylase (307 aa).

Residues H78, H241, and D245 each contribute to the Zn(2+) site. H268 serves as the catalytic Proton donor.

It belongs to the LpxC family. Zn(2+) serves as cofactor.

It carries out the reaction a UDP-3-O-[(3R)-3-hydroxyacyl]-N-acetyl-alpha-D-glucosamine + H2O = a UDP-3-O-[(3R)-3-hydroxyacyl]-alpha-D-glucosamine + acetate. It functions in the pathway glycolipid biosynthesis; lipid IV(A) biosynthesis; lipid IV(A) from (3R)-3-hydroxytetradecanoyl-[acyl-carrier-protein] and UDP-N-acetyl-alpha-D-glucosamine: step 2/6. Catalyzes the hydrolysis of UDP-3-O-myristoyl-N-acetylglucosamine to form UDP-3-O-myristoylglucosamine and acetate, the committed step in lipid A biosynthesis. The protein is UDP-3-O-acyl-N-acetylglucosamine deacetylase of Polaromonas naphthalenivorans (strain CJ2).